The sequence spans 191 residues: NADH-quinone oxidoreductase subunit B (191 aa).

[4Fe-4S] cluster-binding residues include cysteine 52, cysteine 53, cysteine 118, and cysteine 148.

The protein belongs to the complex I 20 kDa subunit family. NDH-1 is composed of 14 different subunits. Subunits NuoB, C, D, E, F, and G constitute the peripheral sector of the complex. It depends on [4Fe-4S] cluster as a cofactor.

Its subcellular location is the cell inner membrane. The catalysed reaction is a quinone + NADH + 5 H(+)(in) = a quinol + NAD(+) + 4 H(+)(out). NDH-1 shuttles electrons from NADH, via FMN and iron-sulfur (Fe-S) centers, to quinones in the respiratory chain. The immediate electron acceptor for the enzyme in this species is believed to be a menaquinone. Couples the redox reaction to proton translocation (for every two electrons transferred, four hydrogen ions are translocated across the cytoplasmic membrane), and thus conserves the redox energy in a proton gradient. In Azobacteroides pseudotrichonymphae genomovar. CFP2, this protein is NADH-quinone oxidoreductase subunit B.